The following is a 186-amino-acid chain: Adenylate kinase isoenzyme 6 homolog (186 aa).

Positions 15, 17, 18, 19, and 20 each coordinate ATP. Residues 48–71 (NLSNIIKDERLYKEFDDELDASIY) are NMPbind. An LID region spans residues 126–136 (KRNYTKEKIKN). An ATP-binding site is contributed by Arg-127.

Belongs to the adenylate kinase family. AK6 subfamily. Monomer and homodimer. Interacts with small ribosomal subunit protein uS11. Not a structural component of 43S pre-ribosomes, but transiently interacts with them by binding to uS11.

The protein resides in the cytoplasm. The protein localises to the nucleus. The catalysed reaction is AMP + ATP = 2 ADP. It catalyses the reaction ATP + H2O = ADP + phosphate + H(+). Functionally, broad-specificity nucleoside monophosphate (NMP) kinase that catalyzes the reversible transfer of the terminal phosphate group between nucleoside triphosphates and monophosphates. Also has ATPase activity. Involved in the late cytoplasmic maturation steps of the 40S ribosomal particles, specifically 18S rRNA maturation. While NMP activity is not required for ribosome maturation, ATPase activity is. Associates transiently with small ribosomal subunit protein uS11. ATP hydrolysis breaks the interaction with uS11. May temporarily remove uS11 from the ribosome to enable a conformational change of the ribosomal RNA that is needed for the final maturation step of the small ribosomal subunit. Its NMP activity may have a role in nuclear energy homeostasis. The sequence is that of Adenylate kinase isoenzyme 6 homolog from Plasmodium falciparum (isolate 3D7).